The primary structure comprises 174 residues: Small ribosomal subunit protein uS5 (174 aa).

The S5 DRBM domain maps to 18–81; the sequence is LKDRLVSVNR…EDAKKNLVKI (64 aa).

The protein belongs to the universal ribosomal protein uS5 family. Part of the 30S ribosomal subunit. Contacts proteins S4 and S8.

Its function is as follows. With S4 and S12 plays an important role in translational accuracy. Located at the back of the 30S subunit body where it stabilizes the conformation of the head with respect to the body. The polypeptide is Small ribosomal subunit protein uS5 (Flavobacterium psychrophilum (strain ATCC 49511 / DSM 21280 / CIP 103535 / JIP02/86)).